Reading from the N-terminus, the 265-residue chain is Phosphate import ATP-binding protein PstB (265 aa).

The ABC transporter domain occupies 18-260; it reads IAAKGVNVYY…PEDPRTESYI (243 aa). ATP is bound at residue 50 to 57; the sequence is GPSGCGKS.

This sequence belongs to the ABC transporter superfamily. Phosphate importer (TC 3.A.1.7) family. As to quaternary structure, the complex is composed of two ATP-binding proteins (PstB), two transmembrane proteins (PstC and PstA) and a solute-binding protein (PstS).

Its subcellular location is the cell inner membrane. The catalysed reaction is phosphate(out) + ATP + H2O = ADP + 2 phosphate(in) + H(+). Part of the ABC transporter complex PstSACB involved in phosphate import. Responsible for energy coupling to the transport system. The protein is Phosphate import ATP-binding protein PstB of Ruegeria sp. (strain TM1040) (Silicibacter sp.).